A 334-amino-acid chain; its full sequence is Rhomboid-like protein 14, mitochondrial (334 aa).

A mitochondrion-targeting transit peptide spans 1–87; the sequence is MENFGEGRRS…RLFLSAFYHV (87 aa). Transmembrane regions (helical) follow at residues 114-134, 146-166, 176-196, and 197-217; these read EFAS…LLLA, AYYN…KVVL, VYGI…LVQM, and FVPN…IIYL. Catalysis depends on Ser156, which acts as the Nucleophile. His206 acts as the Charge relay system in catalysis. Residues 273-302 form a RanBP2-type zinc finger; sequence GPGIWRCQSCTYDNSGWLSACEMCGSGRAR.

It belongs to the peptidase S54 family.

It is found in the mitochondrion membrane. In terms of biological role, probable rhomboid-type serine protease that catalyzes intramembrane proteolysis. May function in the heat-shock response pathway. The protein is Rhomboid-like protein 14, mitochondrial of Arabidopsis thaliana (Mouse-ear cress).